The sequence spans 75 residues: Exodeoxyribonuclease 7 small subunit (75 aa).

This sequence belongs to the XseB family. In terms of assembly, heterooligomer composed of large and small subunits.

It is found in the cytoplasm. It carries out the reaction Exonucleolytic cleavage in either 5'- to 3'- or 3'- to 5'-direction to yield nucleoside 5'-phosphates.. Functionally, bidirectionally degrades single-stranded DNA into large acid-insoluble oligonucleotides, which are then degraded further into small acid-soluble oligonucleotides. This is Exodeoxyribonuclease 7 small subunit from Chlamydia caviae (strain ATCC VR-813 / DSM 19441 / 03DC25 / GPIC) (Chlamydophila caviae).